We begin with the raw amino-acid sequence, 255 residues long: tRNA pseudouridine synthase A (255 aa).

Asp-52 (nucleophile) is an active-site residue. Tyr-111 lines the substrate pocket.

The protein belongs to the tRNA pseudouridine synthase TruA family. As to quaternary structure, homodimer.

It carries out the reaction uridine(38/39/40) in tRNA = pseudouridine(38/39/40) in tRNA. Functionally, formation of pseudouridine at positions 38, 39 and 40 in the anticodon stem and loop of transfer RNAs. In Cereibacter sphaeroides (strain KD131 / KCTC 12085) (Rhodobacter sphaeroides), this protein is tRNA pseudouridine synthase A.